Here is a 268-residue protein sequence, read N- to C-terminus: Hemin import ATP-binding protein HmuV (268 aa).

One can recognise an ABC transporter domain in the interval 5–242 (IEARHLSKRA…ETIRDIFEID (238 aa)). Position 37–44 (37–44 (GPNGAGKS)) interacts with ATP.

This sequence belongs to the ABC transporter superfamily. Heme (hemin) importer (TC 3.A.1.14.5) family. In terms of assembly, the complex is composed of two ATP-binding proteins (HmuV), two transmembrane proteins (HmuU) and a solute-binding protein (HmuT).

The protein resides in the cell inner membrane. Its function is as follows. Part of the ABC transporter complex HmuTUV involved in hemin import. Responsible for energy coupling to the transport system. The chain is Hemin import ATP-binding protein HmuV from Bradyrhizobium diazoefficiens (strain JCM 10833 / BCRC 13528 / IAM 13628 / NBRC 14792 / USDA 110).